Consider the following 176-residue polypeptide: Methylated-DNA--protein-cysteine methyltransferase (176 aa).

The active-site Nucleophile; methyl group acceptor is Cys142.

It belongs to the MGMT family.

It localises to the cytoplasm. It carries out the reaction a 6-O-methyl-2'-deoxyguanosine in DNA + L-cysteinyl-[protein] = S-methyl-L-cysteinyl-[protein] + a 2'-deoxyguanosine in DNA. The enzyme catalyses a 4-O-methyl-thymidine in DNA + L-cysteinyl-[protein] = a thymidine in DNA + S-methyl-L-cysteinyl-[protein]. Functionally, involved in the cellular defense against the biological effects of O6-methylguanine (O6-MeG) and O4-methylthymine (O4-MeT) in DNA. Repairs the methylated nucleobase in DNA by stoichiometrically transferring the methyl group to a cysteine residue in the enzyme. This is a suicide reaction: the enzyme is irreversibly inactivated. This Methanothermobacter thermautotrophicus (strain ATCC 29096 / DSM 1053 / JCM 10044 / NBRC 100330 / Delta H) (Methanobacterium thermoautotrophicum) protein is Methylated-DNA--protein-cysteine methyltransferase.